Here is a 515-residue protein sequence, read N- to C-terminus: Alpha,alpha-trehalose-phosphate synthase [UDP-forming] 1 (515 aa).

2 residues coordinate D-glucose 6-phosphate: Tyr-97 and Asp-151. The UDP site is built by Arg-287 and Lys-292. Residues Arg-287 and Lys-292 each contribute to the UDP-alpha-D-glucose site. Position 325 (Arg-325) interacts with D-glucose 6-phosphate. UDP is bound by residues Val-364 and 390 to 394 (LVAYE). 386–394 (DGMNLVAYE) provides a ligand contact to UDP-alpha-D-glucose. The disordered stretch occupies residues 483 to 515 (GKFQSRKAKLPESADAEKPMNGSGESEESQTTQ). Over residues 491–500 (KLPESADAEK) the composition is skewed to basic and acidic residues.

This sequence belongs to the glycosyltransferase 20 family.

The enzyme catalyses D-glucose 6-phosphate + UDP-alpha-D-glucose = alpha,alpha-trehalose 6-phosphate + UDP + H(+). The protein operates within carbohydrate biosynthesis. Its function is as follows. Synthase catalytic subunit of the trehalose synthase complex that catalyzes the production of trehalose from glucose-6-phosphate and UDP-alpha-D-glucose in a two step process. The disaccharide trehalose serves as a storage carbohydrate that is mobilized during conidial germination. Regulates the level of trehalose as a protectant for cell integrity during thermal and oxidative stress. This chain is Alpha,alpha-trehalose-phosphate synthase [UDP-forming] 1, found in Aspergillus fumigatus (strain ATCC MYA-4609 / CBS 101355 / FGSC A1100 / Af293) (Neosartorya fumigata).